The chain runs to 88 residues: Small ribosomal subunit protein uS17 (88 aa).

It belongs to the universal ribosomal protein uS17 family. As to quaternary structure, part of the 30S ribosomal subunit.

Functionally, one of the primary rRNA binding proteins, it binds specifically to the 5'-end of 16S ribosomal RNA. The protein is Small ribosomal subunit protein uS17 of Prochlorococcus marinus (strain MIT 9515).